The chain runs to 671 residues: Synaptotagmin-like protein 4 (671 aa).

One can recognise a RabBD domain in the interval 4 to 122 (LLDLSFLSEE…KATGDWFYDQ (119 aa)). An FYVE-type zinc finger spans residues 63-105 (CARCQESLGRLSPKTNTCRGCNHLVCRDCRIQESNGTWRCKVC). The segment at 199–243 (SESLDSFTADSDSTSRRDSLDKSGLFPEWKKMSAPKSQVEKETQP) is disordered. Phosphoserine occurs at positions 201, 204, 217, 221, 274, and 289. The C2 1 domain maps to 356 to 478 (VTGRIAFSLK…KLDKKLDHCL (123 aa)). S488 carries the post-translational modification Phosphoserine. The C2 2 domain occupies 507–633 (PASKTPVGGD…ISNGEVVDWM (127 aa)).

Part of a ternary complex containing STX1A and RAB27A. Can bind both dominant negative and dominant active mutants of RAB27A. Binds STXBP1, RAB3A, RAB8A and RAB27B. Interacts with MYO5A.

The protein resides in the membrane. It localises to the cell membrane. Its subcellular location is the cytoplasmic vesicle. The protein localises to the secretory vesicle membrane. In terms of biological role, modulates exocytosis of dense-core granules and secretion of hormones in the pancreas and the pituitary. Interacts with vesicles containing negatively charged phospholipids in a Ca(2+)-independent manner. This Homo sapiens (Human) protein is Synaptotagmin-like protein 4 (SYTL4).